We begin with the raw amino-acid sequence, 1581 residues long: Mediator of RNA polymerase II transcription subunit 1 (1581 aa).

The interaction with the Mediator complex and THRA stretch occupies residues 1–670 (MKAQGETEES…YGSSPLERQN (670 aa)). The segment at 16 to 590 (MSSLLERLHA…SIKDRHESVG (575 aa)) is interaction with ESR1. Interaction with the Mediator complex regions lie at residues 108–212 (FYVE…GYLT) and 215–390 (SGGH…SLQG). The segment at 405-644 (PLILNLIRHQ…MAGNTKNHPM (240 aa)) is interaction with THRA. The interaction with VDR stretch occupies residues 542-788 (PASSPGYGMT…TDILSDIAEE (247 aa)). Position 588 is a phosphoserine (Ser588). Residues 604 to 608 (LTSLL) carry the LXXLL motif 1 motif. Disordered regions lie at residues 609–705 (QITG…HQTE), 791–819 (KLPS…QSTL), 868–895 (LSNS…DDFK), and 947–1566 (EHHS…DFMI). Residues 622–632 (PTPPHHTPPPV) show a composition bias toward pro residues. The interaction with PPARGC1A and THRA stretch occupies residues 622 to 701 (PTPPHHTPPP…SSRLPPEKPK (80 aa)). The LXXLL motif 2 signature appears at 645–649 (LMNLL). Residues 655 to 675 (QDFSTLYGSSPLERQNSSSGS) show a composition bias toward polar residues. Residues 656-1065 (DFSTLYGSSP…TPPIPKITIQ (410 aa)) are interaction with ESR1. Residue Ser664 is modified to Phosphoserine. The tract at residues 681–715 (CSGSNKTKKKESSRLPPEKPKHQTEDDFQRELFSM) is interaction with GATA1. Residues 690–705 (KESSRLPPEKPKHQTE) show a composition bias toward basic and acidic residues. Phosphoserine is present on Ser794. The residue at position 804 (Thr804) is a Phosphothreonine. A compositionally biased stretch (polar residues) spans 807 to 819 (RDSSSSGHSQSTL). An Integrase domain-binding motif (IBM) motif is present at residues 874–901 (QSGFGEEYFDESSQSGDNDDFKGFASQA). Ser886 and Ser952 each carry phosphoserine. Positions 962-973 (LGKEKTQKRVKE) are enriched in basic and acidic residues. Thr1031 is modified (phosphothreonine; by MAPK1 or MAPK3). Low complexity predominate over residues 1033–1050 (PTSTGGSKSPGSSGRSQT). Thr1050 and Thr1056 each carry phosphothreonine. 3 stretches are compositionally biased toward low complexity: residues 1077-1093 (SSHS…SSGS), 1100-1111 (SSSSSSSSASTS), and 1119-1156 (SEGS…PGSS). Phosphoserine is present on Ser1156. The segment covering 1162-1195 (GLSSGSSSTKMKPQGKPSSLMNPSLSKPNISPSH) has biased composition (polar residues). Lys1177 carries the N6-acetyllysine modification. The residue at position 1207 (Ser1207) is a Phosphoserine. Thr1215 carries the phosphothreonine modification. Low complexity-rich tracts occupy residues 1218–1227 (SSKAKSPISS) and 1234–1293 (MSGT…SKGK). Residue Ser1223 is modified to Phosphoserine. Residues 1249–1421 (LGSSGSLSQK…KPGESSGEGL (173 aa)) are interaction with TP53. Residue Ser1302 is modified to Phosphoserine. Over residues 1330–1345 (GVSTNSSSHPMSSKHN) the composition is skewed to polar residues. Ser1347 is modified (phosphoserine). Over residues 1352–1364 (QGKREKSDKDKSK) the composition is skewed to basic and acidic residues. Phosphoserine is present on residues Ser1403 and Ser1433. 2 stretches are compositionally biased toward polar residues: residues 1425–1440 (MASS…SGST) and 1448–1482 (PSHS…SPSS). Thr1440 is subject to Phosphothreonine. At Thr1457 the chain carries Phosphothreonine; by MAPK1 or MAPK3. Phosphoserine occurs at positions 1463, 1465, 1479, 1481, and 1482. The segment covering 1496–1505 (KHKKHKKEKK) has biased composition (basic residues). Basic and acidic residues predominate over residues 1506–1522 (KVKDKDRDRDRDKDRDK). Lys1529 bears the N6-acetyllysine mark. Over residues 1533–1552 (WSKSPISSDQSLSMTSNTIL) the composition is skewed to polar residues.

Belongs to the Mediator complex subunit 1 family. As to quaternary structure, component of the Mediator complex, which is composed of MED1, MED4, MED6, MED7, MED8, MED9, MED10, MED11, MED12, MED13, MED13L, MED14, MED15, MED16, MED17, MED18, MED19, MED20, MED21, MED22, MED23, MED24, MED25, MED26, MED27, MED29, MED30, MED31, CCNC, CDK8 and CDC2L6/CDK11. The MED12, MED13, CCNC and CDK8 subunits form a distinct module termed the CDK8 module. Mediator containing the CDK8 module is less active than Mediator lacking this module in supporting transcriptional activation. Individual preparations of the Mediator complex lacking one or more distinct subunits have been variously termed ARC, CRSP, DRIP, PC2, SMCC and TRAP. This subunit specifically interacts with a number of nuclear receptors in a ligand-dependent fashion including AR, ESR1, ESR2, PPARA, PPARG, RORA, RXRA, RXRG, THRA, THRB and VDR. Interacts with CTNNB1, GABPA, GLI3, PPARGC1A and TP53. Interacts with GATA1 and YWHAH. Interacts with CLOCK; this interaction requires the presence of THRAP3. Interacts with CCAR1. Interacts with NR4A3. Interacts (via IBM motif) with PSIP1 (via IBD domain); phosphorylation increases its affinity for PSIP1. Interacts with USP22. Post-translationally, phosphorylated by MAPK1 or MAPK3 during G2/M phase which may enhance protein stability and promote entry into the nucleolus. Phosphorylation increases its interaction with PSIP1.

It is found in the nucleus. Functionally, component of the Mediator complex, a coactivator involved in the regulated transcription of nearly all RNA polymerase II-dependent genes. Mediator functions as a bridge to convey information from gene-specific regulatory proteins to the basal RNA polymerase II transcription machinery. Mediator is recruited to promoters by direct interactions with regulatory proteins and serves as a scaffold for the assembly of a functional preinitiation complex with RNA polymerase II and the general transcription factors. Acts as a coactivator for GATA1-mediated transcriptional activation during erythroid differentiation of K562 erythroleukemia cells. The polypeptide is Mediator of RNA polymerase II transcription subunit 1 (MED1) (Pongo abelii (Sumatran orangutan)).